Consider the following 341-residue polypeptide: Holliday junction branch migration complex subunit RuvB (341 aa).

A large ATPase domain (RuvB-L) region spans residues M1–Y182. ATP contacts are provided by residues L21, R22, G63, K66, T67, T68, E129 to F131, R172, Y182, and R219. Residue T67 participates in Mg(2+) binding. The segment at T183 to G253 is small ATPAse domain (RuvB-S). The tract at residues H256–G341 is head domain (RuvB-H). R292, R311, and R316 together coordinate DNA.

Belongs to the RuvB family. Homohexamer. Forms an RuvA(8)-RuvB(12)-Holliday junction (HJ) complex. HJ DNA is sandwiched between 2 RuvA tetramers; dsDNA enters through RuvA and exits via RuvB. An RuvB hexamer assembles on each DNA strand where it exits the tetramer. Each RuvB hexamer is contacted by two RuvA subunits (via domain III) on 2 adjacent RuvB subunits; this complex drives branch migration. In the full resolvosome a probable DNA-RuvA(4)-RuvB(12)-RuvC(2) complex forms which resolves the HJ.

Its subcellular location is the cytoplasm. It carries out the reaction ATP + H2O = ADP + phosphate + H(+). The RuvA-RuvB-RuvC complex processes Holliday junction (HJ) DNA during genetic recombination and DNA repair, while the RuvA-RuvB complex plays an important role in the rescue of blocked DNA replication forks via replication fork reversal (RFR). RuvA specifically binds to HJ cruciform DNA, conferring on it an open structure. The RuvB hexamer acts as an ATP-dependent pump, pulling dsDNA into and through the RuvAB complex. RuvB forms 2 homohexamers on either side of HJ DNA bound by 1 or 2 RuvA tetramers; 4 subunits per hexamer contact DNA at a time. Coordinated motions by a converter formed by DNA-disengaged RuvB subunits stimulates ATP hydrolysis and nucleotide exchange. Immobilization of the converter enables RuvB to convert the ATP-contained energy into a lever motion, pulling 2 nucleotides of DNA out of the RuvA tetramer per ATP hydrolyzed, thus driving DNA branch migration. The RuvB motors rotate together with the DNA substrate, which together with the progressing nucleotide cycle form the mechanistic basis for DNA recombination by continuous HJ branch migration. Branch migration allows RuvC to scan DNA until it finds its consensus sequence, where it cleaves and resolves cruciform DNA. This chain is Holliday junction branch migration complex subunit RuvB, found in Cereibacter sphaeroides (strain ATCC 17029 / ATH 2.4.9) (Rhodobacter sphaeroides).